We begin with the raw amino-acid sequence, 141 residues long: Hemoglobin subunit alpha (141 aa).

The Globin domain occupies 1–141 (VLSASDKTNL…VSTVLTSKYR (141 aa)). Phosphoserine is present on S3. The residue at position 7 (K7) is an N6-succinyllysine. T8 is subject to Phosphothreonine. K11 bears the N6-succinyllysine mark. N6-acetyllysine; alternate is present on K16. K16 carries the post-translational modification N6-succinyllysine; alternate. A Phosphotyrosine modification is found at Y24. S35 bears the Phosphoserine mark. K40 carries the post-translational modification N6-succinyllysine. Phosphoserine is present on S49. H58 provides a ligand contact to O2. H87 is a heme b binding site. S102 carries the phosphoserine modification. At T108 the chain carries Phosphothreonine. The residue at position 124 (S124) is a Phosphoserine. Residues T134 and T137 each carry the phosphothreonine modification. S138 is subject to Phosphoserine.

This sequence belongs to the globin family. In terms of assembly, heterotetramer of two alpha chains and two beta chains. In terms of tissue distribution, red blood cells.

In terms of biological role, involved in oxygen transport from the lung to the various peripheral tissues. The chain is Hemoglobin subunit alpha from Blarina brevicauda (Northern short-tailed shrew).